Reading from the N-terminus, the 556-residue chain is Formate--tetrahydrofolate ligase (556 aa).

65-72 (TAAGEGKS) contributes to the ATP binding site.

It belongs to the formate--tetrahydrofolate ligase family.

The catalysed reaction is (6S)-5,6,7,8-tetrahydrofolate + formate + ATP = (6R)-10-formyltetrahydrofolate + ADP + phosphate. It functions in the pathway one-carbon metabolism; tetrahydrofolate interconversion. This chain is Formate--tetrahydrofolate ligase, found in Elusimicrobium minutum (strain Pei191).